We begin with the raw amino-acid sequence, 146 residues long: Large-conductance mechanosensitive channel (146 aa).

3 helical membrane-spanning segments follow: residues 21–41, 44–64, and 83–103; these read VGIIIGAAFTGIVSSLVADLI, VIGLITGGIDFSNVFVNLGDG, and GAFITAVINFLIIAWVVFLLV.

The protein belongs to the MscL family. Homopentamer.

It is found in the cell inner membrane. Channel that opens in response to stretch forces in the membrane lipid bilayer. May participate in the regulation of osmotic pressure changes within the cell. The protein is Large-conductance mechanosensitive channel of Cereibacter sphaeroides (strain ATCC 17025 / ATH 2.4.3) (Rhodobacter sphaeroides).